The primary structure comprises 834 residues: MAP kinase phosphatase with leucine-rich repeats protein 1 (834 aa).

The segment at 1–103 (MIFKKLFSKG…GSGTTKESKK (103 aa)) is disordered. A compositionally biased stretch (low complexity) spans 36–78 (GSGTNTNGLSNSTTNPSSIHSTPTTPTTTASTNLTNSNKLSTL). The segment covering 79 to 98 (APITNGNRSLRGSKDGSGTT) has biased composition (polar residues). LRR repeat units follow at residues 160–181 (ELRS…IGLL), 183–204 (NLKH…LSQL), 206–226 (SLES…NICK), 229–251 (SLTL…INLE), 252–273 (NLKD…LPNN), 274–292 (IEKL…SKSL), 298–319 (SLTT…LSCL), 321–342 (NVKT…VLGS), 345–366 (SLVT…IVTL), and 368–389 (NLRI…PSSE). Positions 503–584 (YEKQENDENN…ENPLKESQGK (82 aa)) are disordered. Over residues 511 to 536 (NNSVTLETTTTISIASDNTDEASIQI) the composition is skewed to polar residues. 2 stretches are compositionally biased toward basic and acidic residues: residues 538 to 554 (QKED…DKLL) and 569 to 582 (KQQE…KESQ). Residues 555–615 (QESFSENNNN…IRLEKIKYQE (61 aa)) are a coiled coil. Positions 695-834 (VPDLIIDKLY…LKKFEKDLSK (140 aa)) constitute a Tyrosine-protein phosphatase domain. The active-site Phosphocysteine intermediate is C778.

This sequence belongs to the protein-tyrosine phosphatase family. Non-receptor class dual specificity subfamily.

It carries out the reaction O-phospho-L-tyrosyl-[protein] + H2O = L-tyrosyl-[protein] + phosphate. It catalyses the reaction O-phospho-L-seryl-[protein] + H2O = L-seryl-[protein] + phosphate. The catalysed reaction is O-phospho-L-threonyl-[protein] + H2O = L-threonyl-[protein] + phosphate. Its function is as follows. Probable phosphatase with dual specificity toward Ser/Thr and Tyr-containing proteins. Dephosphorylates pNPP, in vitro. Essential for proper regulation of erkB (erk2) and optimal motility during development. This chain is MAP kinase phosphatase with leucine-rich repeats protein 1 (mpl1), found in Dictyostelium discoideum (Social amoeba).